The following is a 416-amino-acid chain: 5-hydroxytryptamine receptor 1A-beta (416 aa).

Residues 1–35 (MEGTNNTTGWTHFDSTSNRTSKSFDEEVKLSYQVV) lie on the Extracellular side of the membrane. Residues N5, N6, and N18 are each glycosylated (N-linked (GlcNAc...) asparagine). Residues 36–56 (TSFLLGALILCSIFGNACVVA) form a helical membrane-spanning segment. Topologically, residues 57–70 (AIALERSLQNVANY) are cytoplasmic. A helical membrane pass occupies residues 71-95 (LIGSLAVTDLMVSVLVLPMAALYQV). Residues 96–104 (LNRWTLGQI) lie on the Extracellular side of the membrane. A helical transmembrane segment spans residues 105–129 (PCDIFISLDMLCCTSSILHLCVIAL). C106 and C189 are disulfide-bonded. The serotonin site is built by D113 and C117. The DRY motif; important for ligand-induced conformation changes signature appears at 130–132 (DRY). Topologically, residues 130-149 (DRYWAITEPIDYMKKRTPRR) are cytoplasmic. A helical transmembrane segment spans residues 150-171 (AAVLISVTWLVGFSISIPPMLI). The Extracellular portion of the chain corresponds to 172 to 195 (MRSQPSSMAEDRANSKQCKITQDP). The helical transmembrane segment at 196 to 218 (WYTIYSTFGAFYIPLTLMLVLYG) threads the bilayer. The Cytoplasmic segment spans residues 219-340 (RIFKAARFRI…LARERKTVKT (122 aa)). 1D-myo-inositol 4-phosphate contacts are provided by K339, T340, and G346. A helical transmembrane segment spans residues 341 to 364 (LGIIMGTFILCWLPFFIVALVMPF). Residues 365–372 (CQESCFMP) are Extracellular-facing. A helical membrane pass occupies residues 373–397 (HWLKDVINWLGYSNSLLNPIIYAYF). Residues 390 to 394 (NPIIY) carry the NPxxY motif; important for ligand-induced conformation changes and signaling motif. Positions 397, 398, and 399 each coordinate 1D-myo-inositol 4-phosphate. Topologically, residues 398–416 (NKDFQSAFKKIIKCHFCRA) are cytoplasmic.

This sequence belongs to the G-protein coupled receptor 1 family. 5-hydroxytryptamine receptor subfamily.

The protein localises to the cell membrane. Its activity is regulated as follows. G-protein coupled receptor activity is regulated by lipids: phosphatidylinositol 4-phosphate increases HTR1A-mediated activity. In terms of biological role, G-protein coupled receptor for 5-hydroxytryptamine (serotonin). Also functions as a receptor for various drugs and psychoactive substances. Ligand binding causes a conformation change that triggers signaling via guanine nucleotide-binding proteins (G proteins) and modulates the activity of downstream effectors, such as adenylate cyclase. HTR1A is coupled to G(i)/G(o) G alpha proteins and mediates inhibitory neurotransmission: signaling inhibits adenylate cyclase activity and activates a phosphatidylinositol-calcium second messenger system that regulates the release of Ca(2+) ions from intracellular stores. Beta-arrestin family members regulate signaling by mediating both receptor desensitization and resensitization processes. The sequence is that of 5-hydroxytryptamine receptor 1A-beta (htr1a-B) from Takifugu rubripes (Japanese pufferfish).